Here is a 24-residue protein sequence, read N- to C-terminus: Pandinin-2 (24 aa).

Homooligomer. In terms of tissue distribution, expressed by the venom gland.

It is found in the secreted. The protein localises to the target cell membrane. Functionally, disrupts cell membranes through formation of pores. Has strong antimicrobial activity against Gram-positive bacteria B.subtilis, S.epidermidis, E.faecalis and S.aureus. Is less active against Gram-negative bacteria P.aeruginosa and E.coli. Also increases efficacy of antibiotics (ampicillin, chloramphenicol, streptomycin, kanamycin, novobiocin) when tested against E.coli, probably by facilitating their incorporation into the bacteria. Possesses antifungal activity against C.albicans and hemolytic activity against human, sheep and pig erythrocytes. The sequence is that of Pandinin-2 from Pandinus imperator (Emperor scorpion).